We begin with the raw amino-acid sequence, 163 residues long: Jun dimerization protein 2 (163 aa).

Disordered regions lie at residues 1–20 (MMPG…PGLG) and 58–89 (GKRP…AARC). Residue Lys-65 forms a Glycyl lysine isopeptide (Lys-Gly) (interchain with G-Cter in SUMO2) linkage. The bZIP domain occupies 72–135 (EERRKRRREK…QQLILMLNRH (64 aa)). Positions 74–96 (RRKRRREKNKVAAARCRNKKKER) are basic motif. The interval 100–128 (LQRESERLELMNAELKTQIEELKQERQQL) is leucine-zipper. The residue at position 148 (Thr-148) is a Phosphothreonine; by MAPK8.

Belongs to the bZIP family. ATF subfamily. Forms a homodimer or heterodimer with JUN, JUNB, JUND, CEBPG and ATF2 thereby inhibiting transactivation by JUN, ATF2 and CEBPG. Binds multiple DNA elements such as cAMP-response element (CRE) and TPA response element (TRE) either as homodimer or heterodimer. Interacts with IRF2BP1. Phosphorylation of Thr-148 by MAPK8 in response to different stress conditions such as, UV irradiation, oxidatives stress and anisomycin treatments. Post-translationally, polyubiquitinated; probably by IRF2BP1.

It is found in the nucleus. Component of the AP-1 transcription factor that represses transactivation mediated by the Jun family of proteins. Involved in a variety of transcriptional responses associated with AP-1 such as UV-induced apoptosis, cell differentiation, tumorigenesis and antitumogeneris. Can also function as a repressor by recruiting histone deacetylase 3/HDAC3 to the promoter region of JUN. May control transcription via direct regulation of the modification of histones and the assembly of chromatin. The protein is Jun dimerization protein 2 (JDP2) of Homo sapiens (Human).